The sequence spans 293 residues: Ribosomal protein L11 methyltransferase (293 aa).

The S-adenosyl-L-methionine site is built by Thr-145, Gly-166, Asp-188, and Asn-230.

Belongs to the methyltransferase superfamily. PrmA family.

Its subcellular location is the cytoplasm. The enzyme catalyses L-lysyl-[protein] + 3 S-adenosyl-L-methionine = N(6),N(6),N(6)-trimethyl-L-lysyl-[protein] + 3 S-adenosyl-L-homocysteine + 3 H(+). Its function is as follows. Methylates ribosomal protein L11. This Enterobacter sp. (strain 638) protein is Ribosomal protein L11 methyltransferase.